Consider the following 623-residue polypeptide: UvrABC system protein C (623 aa).

One can recognise a GIY-YIG domain in the interval 27–105 (GSPGVYRMLD…IKQLKPRYNV (79 aa)). A UVR domain is found at 215–250 (TKVQANLAEQMQAASEAMEFERAAALRDRIKALTQV).

It belongs to the UvrC family. As to quaternary structure, interacts with UvrB in an incision complex.

It localises to the cytoplasm. Functionally, the UvrABC repair system catalyzes the recognition and processing of DNA lesions. UvrC both incises the 5' and 3' sides of the lesion. The N-terminal half is responsible for the 3' incision and the C-terminal half is responsible for the 5' incision. The sequence is that of UvrABC system protein C from Cereibacter sphaeroides (strain ATCC 17023 / DSM 158 / JCM 6121 / CCUG 31486 / LMG 2827 / NBRC 12203 / NCIMB 8253 / ATH 2.4.1.) (Rhodobacter sphaeroides).